Reading from the N-terminus, the 452-residue chain is UPF0210 protein Cthe_0410 (452 aa).

Belongs to the UPF0210 family. Homodimer.

This chain is UPF0210 protein Cthe_0410, found in Acetivibrio thermocellus (strain ATCC 27405 / DSM 1237 / JCM 9322 / NBRC 103400 / NCIMB 10682 / NRRL B-4536 / VPI 7372) (Clostridium thermocellum).